Consider the following 430-residue polypeptide: Serine--tRNA ligase (430 aa).

236–238 lines the L-serine pocket; that stretch reads TAE. 267 to 269 serves as a coordination point for ATP; sequence RSE. Glu-290 provides a ligand contact to L-serine. Position 354–357 (354–357) interacts with ATP; sequence EISS. Ser-390 lines the L-serine pocket.

Belongs to the class-II aminoacyl-tRNA synthetase family. Type-1 seryl-tRNA synthetase subfamily. In terms of assembly, homodimer. The tRNA molecule binds across the dimer.

It localises to the cytoplasm. It catalyses the reaction tRNA(Ser) + L-serine + ATP = L-seryl-tRNA(Ser) + AMP + diphosphate + H(+). It carries out the reaction tRNA(Sec) + L-serine + ATP = L-seryl-tRNA(Sec) + AMP + diphosphate + H(+). It participates in aminoacyl-tRNA biosynthesis; selenocysteinyl-tRNA(Sec) biosynthesis; L-seryl-tRNA(Sec) from L-serine and tRNA(Sec): step 1/1. Functionally, catalyzes the attachment of serine to tRNA(Ser). Is also able to aminoacylate tRNA(Sec) with serine, to form the misacylated tRNA L-seryl-tRNA(Sec), which will be further converted into selenocysteinyl-tRNA(Sec). The chain is Serine--tRNA ligase from Idiomarina loihiensis (strain ATCC BAA-735 / DSM 15497 / L2-TR).